The sequence spans 307 residues: Aspartate carbamoyltransferase catalytic subunit (307 aa).

The carbamoyl phosphate site is built by arginine 56 and threonine 57. Residue lysine 84 coordinates L-aspartate. Positions 106, 136, and 139 each coordinate carbamoyl phosphate. Residues arginine 169 and arginine 221 each coordinate L-aspartate. Residues alanine 262 and proline 263 each coordinate carbamoyl phosphate.

Belongs to the aspartate/ornithine carbamoyltransferase superfamily. ATCase family. In terms of assembly, heterododecamer (2C3:3R2) of six catalytic PyrB chains organized as two trimers (C3), and six regulatory PyrI chains organized as three dimers (R2).

It catalyses the reaction carbamoyl phosphate + L-aspartate = N-carbamoyl-L-aspartate + phosphate + H(+). Its pathway is pyrimidine metabolism; UMP biosynthesis via de novo pathway; (S)-dihydroorotate from bicarbonate: step 2/3. Catalyzes the condensation of carbamoyl phosphate and aspartate to form carbamoyl aspartate and inorganic phosphate, the committed step in the de novo pyrimidine nucleotide biosynthesis pathway. The sequence is that of Aspartate carbamoyltransferase catalytic subunit from Streptococcus pneumoniae serotype 2 (strain D39 / NCTC 7466).